Here is a 1024-residue protein sequence, read N- to C-terminus: Nardilysin-like (1024 aa).

The tract at residues 41 to 103 (PDIYPEGSVP…DEVKGKGDHQ (63 aa)) is disordered. Over residues 52–95 (QIDEDDEDGEEEDSDGSSEDDDDDEDDEEDGEGDEEDEDEDEDE) the composition is skewed to acidic residues. Histidine 129 contributes to the Zn(2+) binding site. Glutamate 132 (proton acceptor) is an active-site residue. Histidine 133 is a binding site for Zn(2+). Glutamate 203 is a catalytic residue. Glutamate 210 provides a ligand contact to Zn(2+).

Belongs to the peptidase M16 family. Zn(2+) is required as a cofactor.

The enzyme catalyses Hydrolysis of polypeptides, preferably at -Xaa-|-Arg-Lys-, and less commonly at -Arg-|-Arg-Xaa-, in which Xaa is not Arg or Lys.. Its function is as follows. Cleaves peptide substrates on the N-terminus of arginine residues in dibasic pairs. This Arabidopsis thaliana (Mouse-ear cress) protein is Nardilysin-like.